Here is a 290-residue protein sequence, read N- to C-terminus: Eukaryotic translation initiation factor 3 subunit F-2 (290 aa).

Positions 12 to 150 (VRLQPLVLFQ…TRLYCGVTMG (139 aa)) constitute an MPN domain.

Belongs to the eIF-3 subunit F family. As to quaternary structure, component of the eukaryotic translation initiation factor 3 (eIF-3) complex. The eIF-3 complex interacts with pix.

Its subcellular location is the cytoplasm. Functionally, component of the eukaryotic translation initiation factor 3 (eIF-3) complex, which is involved in protein synthesis of a specialized repertoire of mRNAs and, together with other initiation factors, stimulates binding of mRNA and methionyl-tRNAi to the 40S ribosome. The eIF-3 complex specifically targets and initiates translation of a subset of mRNAs involved in cell proliferation. This chain is Eukaryotic translation initiation factor 3 subunit F-2, found in Drosophila virilis (Fruit fly).